The following is a 641-amino-acid chain: Putative ABC transporter ATP-binding protein MA_0870 (641 aa).

One can recognise an ABC transporter 1 domain in the interval 10-250 (IEIKDLWYTY…IEVFHRLGLR (241 aa)). 44 to 51 (GPTGCGKS) serves as a coordination point for ATP. The tract at residues 286-332 (VKTPRNFSNPEEETGRRTDPAERNEFVNTGSGNIKYGDNRSENKGSE) is disordered. Basic and acidic residues-rich tracts occupy residues 298–310 (ETGRRTDPAERNE) and 322–332 (GDNRSENKGSE). The ABC transporter 2 domain maps to 338 to 566 (ISIRDLWSGY…IEILKQASLT (229 aa)). 371–378 (GTNGSGKS) contributes to the ATP binding site.

It belongs to the ABC transporter superfamily.

It is found in the cell membrane. Its function is as follows. Probably part of an ABC transporter complex. Responsible for energy coupling to the transport system. The sequence is that of Putative ABC transporter ATP-binding protein MA_0870 from Methanosarcina acetivorans (strain ATCC 35395 / DSM 2834 / JCM 12185 / C2A).